Consider the following 314-residue polypeptide: MAFAASQQLNRYYNLYKNIDVTFSKEVVSTLNFEPKQVFVRCSGGQWPCIINSASMTKAKIICGKKSGFLARLRSGITSVNIRFAFFDTEGKDSLSFFVAAKLVGISSYEAGNQDLVLITFEYTQRAPDDLIEKLGILLEANINSQKRRNERVVITPEISRKIGLVEKGTVVYIDAVPRRCLIRDLSFSGAKILLVGIANFLINKEVILRFAFDDPQSVFGIKGKTVRTEPVEGRKDLVALAVQYYPKNIPMMYKMYLNKYFSVVRKPASDGFGDDFLEDVAPASSFTPVSSPIGTNTAPLTPPPADSAPEQIS.

The 89-residue stretch at Gln146–Gly234 folds into the PilZ domain. Residues Thr288–Pro300 are compositionally biased toward polar residues. A disordered region spans residues Thr288–Ser314.

In terms of biological role, cyclic-di-GMP binding protein that plays important roles in motility, chemotaxis, biofilm formation and virulence. The chain is Cyclic di-GMP binding protein TDE_0214 from Treponema denticola (strain ATCC 35405 / DSM 14222 / CIP 103919 / JCM 8153 / KCTC 15104).